We begin with the raw amino-acid sequence, 233 residues long: Cilia- and flagella-associated protein 299 (233 aa).

In terms of tissue distribution, abundantly expressed in testis, specifically in spermatogonia and primary spermatocytes but not in secondary spermatocytes and spermatids.

It localises to the cytoplasm. Its subcellular location is the nucleus. May be involved in spermatogenesis. In Mus musculus (Mouse), this protein is Cilia- and flagella-associated protein 299.